The sequence spans 386 residues: Succinate--CoA ligase [ADP-forming] subunit beta (386 aa).

The ATP-grasp domain occupies 9–244 (KAVLRSYGVS…LDEEDSKEIE (236 aa)). ATP contacts are provided by residues Lys46, 53 to 55 (GRG), Glu99, Cys102, and Glu107. Residues Asn199 and Asp213 each contribute to the Mg(2+) site. Substrate-binding positions include Asn264 and 321–323 (GIM).

This sequence belongs to the succinate/malate CoA ligase beta subunit family. In terms of assembly, heterotetramer of two alpha and two beta subunits. Requires Mg(2+) as cofactor.

It carries out the reaction succinate + ATP + CoA = succinyl-CoA + ADP + phosphate. It catalyses the reaction GTP + succinate + CoA = succinyl-CoA + GDP + phosphate. Its pathway is carbohydrate metabolism; tricarboxylic acid cycle; succinate from succinyl-CoA (ligase route): step 1/1. In terms of biological role, succinyl-CoA synthetase functions in the citric acid cycle (TCA), coupling the hydrolysis of succinyl-CoA to the synthesis of either ATP or GTP and thus represents the only step of substrate-level phosphorylation in the TCA. The beta subunit provides nucleotide specificity of the enzyme and binds the substrate succinate, while the binding sites for coenzyme A and phosphate are found in the alpha subunit. This Bacillus cereus (strain ATCC 14579 / DSM 31 / CCUG 7414 / JCM 2152 / NBRC 15305 / NCIMB 9373 / NCTC 2599 / NRRL B-3711) protein is Succinate--CoA ligase [ADP-forming] subunit beta.